Consider the following 374-residue polypeptide: MKFTPAKPPLTGETLESLTARLRERGEPAFRASQILDWVYKKRARSWDGMTNLPKPLRTWLDDTFDLMPATLVLNKQSADVTDKLLLELRDGSLIETVIIRAPQEGVGQDHSRKTICISTQVGCAMGCVFCASGLAGLKRDLSAGEIVAQLLQVCYREDALTPRAHMELASFDNIVVMGMGEPLANYDALIRALTILNADWGLGFGARRITVSTSGLVPKILQLADEPLGFRLAISLHGATDEVREKIMPVNKAFPLAKLLPAVKAFSEKHGRMITLEFILIDGVNDSLEQAEKLRDIALDLHAHVNLIPYNTVEGLAWKRPSITRQERFADVLRARRVSVTLRREKGHDIDAACGQLRLKTEKERQVLAAAKT.

Catalysis depends on glutamate 96, which acts as the Proton acceptor. Residues 110–350 (DHSRKTICIS…VTLRREKGHD (241 aa)) enclose the Radical SAM core domain. A disulfide bridge connects residues cysteine 117 and cysteine 355. [4Fe-4S] cluster-binding residues include cysteine 124, cysteine 128, and cysteine 131. S-adenosyl-L-methionine-binding positions include 181–182 (GE), serine 213, 236–238 (SLH), and asparagine 312. Catalysis depends on cysteine 355, which acts as the S-methylcysteine intermediate.

It belongs to the radical SAM superfamily. RlmN family. [4Fe-4S] cluster serves as cofactor.

It localises to the cytoplasm. It carries out the reaction adenosine(2503) in 23S rRNA + 2 reduced [2Fe-2S]-[ferredoxin] + 2 S-adenosyl-L-methionine = 2-methyladenosine(2503) in 23S rRNA + 5'-deoxyadenosine + L-methionine + 2 oxidized [2Fe-2S]-[ferredoxin] + S-adenosyl-L-homocysteine. The catalysed reaction is adenosine(37) in tRNA + 2 reduced [2Fe-2S]-[ferredoxin] + 2 S-adenosyl-L-methionine = 2-methyladenosine(37) in tRNA + 5'-deoxyadenosine + L-methionine + 2 oxidized [2Fe-2S]-[ferredoxin] + S-adenosyl-L-homocysteine. In terms of biological role, specifically methylates position 2 of adenine 2503 in 23S rRNA and position 2 of adenine 37 in tRNAs. The chain is Probable dual-specificity RNA methyltransferase RlmN 3 from Opitutus terrae (strain DSM 11246 / JCM 15787 / PB90-1).